The following is a 122-amino-acid chain: Large ribosomal subunit protein uL14 (122 aa).

This sequence belongs to the universal ribosomal protein uL14 family. In terms of assembly, part of the 50S ribosomal subunit. Forms a cluster with proteins L3 and L19. In the 70S ribosome, L14 and L19 interact and together make contacts with the 16S rRNA in bridges B5 and B8.

Functionally, binds to 23S rRNA. Forms part of two intersubunit bridges in the 70S ribosome. This Flavobacterium psychrophilum (strain ATCC 49511 / DSM 21280 / CIP 103535 / JIP02/86) protein is Large ribosomal subunit protein uL14.